The following is a 213-amino-acid chain: MSERDRNGGRSADNNRNDRNERGGRNDRGGRNDRRNNQQDERNQYIERVVTINRVSKVVKGGRRFSFTALVIVGDGQGMVGVGYGKAKEVPAAIQKGAEEARKNFFRVPMINGTITHPVQGEAAAGVVMLRPAAPGTGVIAGGAARPVLECAGVQDILCKSLGSPNAINVVHATVAGLKELVRPEEVAARRGKSLEEVAPAAMLRARAAGQGA.

Positions 1 to 42 (MSERDRNGGRSADNNRNDRNERGGRNDRGGRNDRRNNQQDER) are disordered. In terms of domain architecture, S5 DRBM spans 45 to 108 (YIERVVTINR…EEARKNFFRV (64 aa)).

Belongs to the universal ribosomal protein uS5 family. As to quaternary structure, part of the 30S ribosomal subunit. Contacts proteins S4 and S8.

Functionally, with S4 and S12 plays an important role in translational accuracy. Located at the back of the 30S subunit body where it stabilizes the conformation of the head with respect to the body. The chain is Small ribosomal subunit protein uS5 from Corynebacterium urealyticum (strain ATCC 43042 / DSM 7109).